The primary structure comprises 178 residues: uncharacterized protein (178 aa).

The disordered stretch occupies residues Gly-64 to Thr-103. A compositionally biased stretch (basic and acidic residues) spans Thr-73–Glu-84.

This is an uncharacterized protein from Acidianus sp. F28 (AFV-2).